Reading from the N-terminus, the 158-residue chain is SsrA-binding protein (158 aa).

This sequence belongs to the SmpB family.

The protein localises to the cytoplasm. Its function is as follows. Required for rescue of stalled ribosomes mediated by trans-translation. Binds to transfer-messenger RNA (tmRNA), required for stable association of tmRNA with ribosomes. tmRNA and SmpB together mimic tRNA shape, replacing the anticodon stem-loop with SmpB. tmRNA is encoded by the ssrA gene; the 2 termini fold to resemble tRNA(Ala) and it encodes a 'tag peptide', a short internal open reading frame. During trans-translation Ala-aminoacylated tmRNA acts like a tRNA, entering the A-site of stalled ribosomes, displacing the stalled mRNA. The ribosome then switches to translate the ORF on the tmRNA; the nascent peptide is terminated with the 'tag peptide' encoded by the tmRNA and targeted for degradation. The ribosome is freed to recommence translation, which seems to be the essential function of trans-translation. This chain is SsrA-binding protein, found in Pseudoalteromonas atlantica (strain T6c / ATCC BAA-1087).